The following is a 429-amino-acid chain: Histidine--tRNA ligase (429 aa).

It belongs to the class-II aminoacyl-tRNA synthetase family. Homodimer.

It is found in the cytoplasm. It catalyses the reaction tRNA(His) + L-histidine + ATP = L-histidyl-tRNA(His) + AMP + diphosphate + H(+). The protein is Histidine--tRNA ligase of Acidovorax ebreus (strain TPSY) (Diaphorobacter sp. (strain TPSY)).